A 577-amino-acid chain; its full sequence is Arginine--tRNA ligase (577 aa).

The 'HIGH' region motif lies at 122-132; it reads PNVAKEMHVGH.

The protein belongs to the class-I aminoacyl-tRNA synthetase family. Monomer.

It is found in the cytoplasm. The catalysed reaction is tRNA(Arg) + L-arginine + ATP = L-arginyl-tRNA(Arg) + AMP + diphosphate. This chain is Arginine--tRNA ligase, found in Haemophilus influenzae (strain PittEE).